Here is a 137-residue protein sequence, read N- to C-terminus: Large ribosomal subunit protein uL16 (137 aa).

Positions 1–17 (MLQPKRTKFRKTHKGRN) are enriched in basic residues. Residues 1–23 (MLQPKRTKFRKTHKGRNRGLAQN) are disordered.

Belongs to the universal ribosomal protein uL16 family. In terms of assembly, part of the 50S ribosomal subunit.

Binds 23S rRNA and is also seen to make contacts with the A and possibly P site tRNAs. This Pseudoalteromonas translucida (strain TAC 125) protein is Large ribosomal subunit protein uL16.